The sequence spans 396 residues: Glycerate kinase (396 aa).

The protein belongs to the glycerate kinase type-2 family.

Its subcellular location is the cytoplasm. The catalysed reaction is (R)-glycerate + ATP = (2R)-3-phosphoglycerate + ADP + H(+). The sequence is that of Glycerate kinase (GLYCTK) from Macaca fascicularis (Crab-eating macaque).